The following is a 224-amino-acid chain: 4'-phosphopantetheinyl transferase ffp (224 aa).

Mg(2+) contacts are provided by aspartate 107, glutamate 109, and glutamate 151. Residues 158–189 form a peptidyl carrier protein binding region; the sequence is GKGLSLPLDSFSVRLHEDGRVSVELPEHHTPC.

The protein belongs to the P-Pant transferase superfamily. Gsp/Sfp/HetI/AcpT family. Mg(2+) serves as cofactor.

The catalysed reaction is apo-[peptidyl-carrier protein] + CoA = holo-[peptidyl-carrier protein] + adenosine 3',5'-bisphosphate + H(+). May activate the peptidyl carrier protein (PCP) domains of fengycin synthase by transferring the 4'-phosphopantetheinyl moiety of coenzyme A (CoA) to a serine residue. This is 4'-phosphopantetheinyl transferase ffp (ffp) from Bacillus subtilis.